A 441-amino-acid polypeptide reads, in one-letter code: Membrane protein PB1A10.07c (441 aa).

11 helical membrane-spanning segments follow: residues 1–21 (MGAV…VVGI), 41–61 (VGAV…SWCM), 97–117 (LSFT…LCNT), 128–148 (GLWP…FFIP), 158–178 (IISV…LVDF), 206–226 (TVGM…FFCA), 235–255 (INTI…HPTI), 263–283 (GLAQ…SALA), 307–327 (VIGA…AASS), 364–384 (YNFI…ASLL), and 415–435 (IITS…PVFF).

The protein belongs to the TDE1 family.

It localises to the membrane. The chain is Membrane protein PB1A10.07c from Schizosaccharomyces pombe (strain 972 / ATCC 24843) (Fission yeast).